The primary structure comprises 188 residues: Pterocarpan synthase 1 (188 aa).

The N-terminal stretch at 1 to 23 (MAKSTTFFISLTLPFLLLSVVTA) is a signal peptide. N-linked (GlcNAc...) asparagine glycosylation is present at Asn127.

It belongs to the plant dirigent protein family. As to quaternary structure, homodimer.

It is found in the secreted. It localises to the extracellular space. The protein localises to the apoplast. It carries out the reaction a (4R)-4,2'-dihydroxyisoflavan = a pterocarpan + H2O.. The enzyme catalyses (3R,4R)-7,2'-dihydroxy-4'-methoxyisoflavanol = (-)-medicarpin + H2O. It catalyses the reaction (3S,4R)-7,2'-dihydroxy-4'-methoxyisoflavanol = (+)-medicarpin + H2O. The catalysed reaction is (3R,4R)-3-(6-hydroxy-1,3-benzodioxol-5-yl)-3,4-dihydro-2H-chromene-4,7-diol = (-)-maackiain + H2O. It carries out the reaction (3R,4R)-7,2',4'-trihydroxyisoflavanol = (6aR,11aR)-3,9-dihydroxypterocarpan + H2O. Involved in pterocarpan phytoalexin biosynthesis. Catalyzes the last step in the biosynthesis of the phytoalexin medicarpin, and thereby contributes to plant defense reactions. Dirigent proteins impart stereoselectivity on the phenoxy radical-coupling reaction, yielding optically active lignans from two molecules of coniferyl alcohol in the biosynthesis of lignans, flavonolignans, and alkaloids and thus plays a central role in plant secondary metabolism. The protein is Pterocarpan synthase 1 of Glycyrrhiza echinata (Licorice).